Consider the following 123-residue polypeptide: Small ribosomal subunit protein uS12 (123 aa).

3-methylthioaspartic acid is present on D89.

Belongs to the universal ribosomal protein uS12 family. Part of the 30S ribosomal subunit. Contacts proteins S8 and S17. May interact with IF1 in the 30S initiation complex.

In terms of biological role, with S4 and S5 plays an important role in translational accuracy. Interacts with and stabilizes bases of the 16S rRNA that are involved in tRNA selection in the A site and with the mRNA backbone. Located at the interface of the 30S and 50S subunits, it traverses the body of the 30S subunit contacting proteins on the other side and probably holding the rRNA structure together. The combined cluster of proteins S8, S12 and S17 appears to hold together the shoulder and platform of the 30S subunit. The polypeptide is Small ribosomal subunit protein uS12 (Desulfovibrio desulfuricans (strain ATCC 27774 / DSM 6949 / MB)).